We begin with the raw amino-acid sequence, 197 residues long: Recombination protein RecR (197 aa).

Residues 56–71 (CERCNTFTETEICQRC) form a C4-type zinc finger. Positions 79–174 (SLLCVVEMPA…RVSRLSRGVP (96 aa)) constitute a Toprim domain.

Belongs to the RecR family.

May play a role in DNA repair. It seems to be involved in an RecBC-independent recombinational process of DNA repair. It may act with RecF and RecO. This chain is Recombination protein RecR, found in Aromatoleum aromaticum (strain DSM 19018 / LMG 30748 / EbN1) (Azoarcus sp. (strain EbN1)).